The sequence spans 297 residues: 1D-myo-inositol 2-acetamido-2-deoxy-alpha-D-glucopyranoside deacetylase (297 aa).

Residues H11, D14, and H154 each coordinate Zn(2+).

The protein belongs to the MshB deacetylase family. Requires Zn(2+) as cofactor.

It catalyses the reaction 1D-myo-inositol 2-acetamido-2-deoxy-alpha-D-glucopyranoside + H2O = 1D-myo-inositol 2-amino-2-deoxy-alpha-D-glucopyranoside + acetate. Its function is as follows. Catalyzes the deacetylation of 1D-myo-inositol 2-acetamido-2-deoxy-alpha-D-glucopyranoside (GlcNAc-Ins) in the mycothiol biosynthesis pathway. This chain is 1D-myo-inositol 2-acetamido-2-deoxy-alpha-D-glucopyranoside deacetylase, found in Tsukamurella paurometabola (strain ATCC 8368 / DSM 20162 / CCUG 35730 / CIP 100753 / JCM 10117 / KCTC 9821 / NBRC 16120 / NCIMB 702349 / NCTC 13040) (Corynebacterium paurometabolum).